A 436-amino-acid polypeptide reads, in one-letter code: Eukaryotic translation initiation factor 4B (436 aa).

Positions 56 to 98 (AKNNSNNTRSGGFGGSFGGRSRLDPALGGGSSDRREEYPVPDA) are disordered. 2 positions are modified to phosphoserine: serine 65 and serine 71. Residues 101-183 (YRAVINNIPW…RTVYVSVAAP (83 aa)) enclose the RRM domain. Residues 185–406 (RGGGADVDWS…EKQNGDAKEN (222 aa)) form a disordered region. The stretch at 190 to 210 (DVDWSSARGSNFQGDGREDAP) is one 1; approximate repeat. Positions 190–350 (DVDWSSARGS…DWGAARGAQF (161 aa)) are 7 X approximate tandem repeats. A run of 5 repeats spans residues 211-232 (DLDW…REEV), 233-258 (DIDW…REEV), 259-284 (DIDW…REEP), 285-310 (DIDW…REEP), and 311-340 (DIDW…EPAL). Residues 329-338 (PRREREKEEP) show a composition bias toward basic and acidic residues. The 7; truncated repeat unit spans residues 341-350 (DWGAARGAQF). 2 stretches are compositionally biased toward basic and acidic residues: residues 359–376 (TYKD…EQPK) and 397–406 (EKQNGDAKEN).

Its function is as follows. Involved in translation initiation. May be the homolog of mammalian eIF4B and be part of an RNA helicase. STM1/TIF3 is a non-essential gene. This is Eukaryotic translation initiation factor 4B (TIF3) from Saccharomyces cerevisiae (strain ATCC 204508 / S288c) (Baker's yeast).